Consider the following 2193-residue polypeptide: Protein sidekick-1 (2193 aa).

Positions methionine 1 to glycine 23 are enriched in low complexity. The tract at residues methionine 1–alanine 56 is disordered. Ig-like C2-type domains follow at residues proline 86–glutamine 168, glycine 173–isoleucine 259, proline 275–serine 363, proline 368–threonine 458, and proline 462–threonine 551. A disulfide bridge links cysteine 108 with cysteine 151. 3 N-linked (GlcNAc...) asparagine glycosylation sites follow: asparagine 123, asparagine 253, and asparagine 283. 3 disulfide bridges follow: cysteine 297–cysteine 344, cysteine 390–cysteine 440, and cysteine 483–cysteine 535. N-linked (GlcNAc...) asparagine glycosylation is found at asparagine 532, asparagine 545, and asparagine 554. Residues threonine 556 to glutamate 645 enclose the Ig-like C2-type 6 domain. Cysteine 577 and cysteine 629 form a disulfide bridge. Fibronectin type-III domains are found at residues proline 652–glutamate 748, proline 753–glycine 849, proline 854–aspartate 952, alanine 956–aspartate 1050, alanine 1054–alanine 1153, alanine 1158–serine 1256, alanine 1261–aspartate 1358, proline 1362–arginine 1456, proline 1461–aspartate 1558, proline 1563–alanine 1681, alanine 1686–alanine 1782, proline 1786–alanine 1881, and serine 1884–alanine 1982. N-linked (GlcNAc...) asparagine glycans are attached at residues asparagine 764, asparagine 803, asparagine 864, asparagine 997, and asparagine 1006. N-linked (GlcNAc...) asparagine glycosylation is found at asparagine 1264 and asparagine 1315. N-linked (GlcNAc...) asparagine glycans are attached at residues asparagine 1636, asparagine 1730, asparagine 1801, and asparagine 1875. Residues phenylalanine 1992–valine 2012 traverse the membrane as a helical segment. At leucine 2013–valine 2193 the chain is on the cytoplasmic side. Residues serine 2057–aspartate 2080 are disordered. Positions threonine 2187–valine 2193 match the PDZ-binding motif.

It belongs to the sidekick family. As to quaternary structure, homodimer; mediates homophilic interactions to promote cell adhesion. Interacts (via PDZ-binding motif) with MAGI1, MAGI2, DLG2, DLG3 and DLG4. In terms of assembly, does not mediate homophilic interactions. Expressed by non-overlapping subsets of retinal neurons. Sdk1 and Sdk2 are expressed in non-overlapping subsets of interneurons and retinal ganglion cells (RGCs) that form synapses in distinct inner plexiform layer (IPL) sublaminae (at protein level).

The protein resides in the cell membrane. It localises to the synapse. Functionally, adhesion molecule that promotes lamina-specific synaptic connections in the retina. Expressed in specific subsets of interneurons and retinal ganglion cells (RGCs) and promotes synaptic connectivity via homophilic interactions. In Mus musculus (Mouse), this protein is Protein sidekick-1.